The sequence spans 432 residues: Histidine--tRNA ligase (432 aa).

The disordered stretch occupies residues 412-432; that stretch reads TQVPLAAFPPEEGRPTYDDYA. Positions 422–432 are enriched in basic and acidic residues; it reads EEGRPTYDDYA.

This sequence belongs to the class-II aminoacyl-tRNA synthetase family.

Its subcellular location is the cytoplasm. The enzyme catalyses tRNA(His) + L-histidine + ATP = L-histidyl-tRNA(His) + AMP + diphosphate + H(+). The sequence is that of Histidine--tRNA ligase from Natronomonas pharaonis (strain ATCC 35678 / DSM 2160 / CIP 103997 / JCM 8858 / NBRC 14720 / NCIMB 2260 / Gabara) (Halobacterium pharaonis).